Reading from the N-terminus, the 343-residue chain is Selenide, water dikinase (343 aa).

The active site involves Sec15. Residue Sec15 is a non-standard amino acid, selenocysteine. ATP is bound by residues Lys18 and 45-47; that span reads TAD. Mg(2+) is bound at residue Asp48. ATP-binding positions include Asp65, Asp88, and 135 to 137; that span reads GHT. Mg(2+) is bound at residue Asp88. Asp223 provides a ligand contact to Mg(2+).

Belongs to the selenophosphate synthase 1 family. Class I subfamily. As to quaternary structure, homodimer. Requires Mg(2+) as cofactor.

The enzyme catalyses hydrogenselenide + ATP + H2O = selenophosphate + AMP + phosphate + 2 H(+). Functionally, synthesizes selenophosphate from selenide and ATP. The protein is Selenide, water dikinase of Carboxydothermus hydrogenoformans (strain ATCC BAA-161 / DSM 6008 / Z-2901).